The chain runs to 78 residues: Conotoxin 5 (78 aa).

The first 22 residues, 1–22, serve as a signal peptide directing secretion; that stretch reads MKLTCMMIVTVLFLTAWIFITA. Residues 23 to 49 constitute a propeptide that is removed on maturation; that stretch reads DNSRNGIENLPRMRRHEMKNPKASKLN. 3 disulfide bridges follow: cysteine 53/cysteine 69, cysteine 60/cysteine 73, and cysteine 68/cysteine 77.

This sequence belongs to the conotoxin O1 superfamily. Expressed by the venom duct.

The protein resides in the secreted. The sequence is that of Conotoxin 5 from Conus imperialis (Imperial cone).